We begin with the raw amino-acid sequence, 224 residues long: tRNA (guanine-N(7)-)-methyltransferase (224 aa).

Residues Glu-57, Asp-82, and Asp-109 each coordinate S-adenosyl-L-methionine. Residue Asp-167 coordinates substrate.

The protein belongs to the class I-like SAM-binding methyltransferase superfamily. TrmB family.

The catalysed reaction is guanosine(46) in tRNA + S-adenosyl-L-methionine = N(7)-methylguanosine(46) in tRNA + S-adenosyl-L-homocysteine. It functions in the pathway tRNA modification; N(7)-methylguanine-tRNA biosynthesis. Catalyzes the formation of N(7)-methylguanine at position 46 (m7G46) in tRNA. The protein is tRNA (guanine-N(7)-)-methyltransferase of Chloroflexus aurantiacus (strain ATCC 29366 / DSM 635 / J-10-fl).